The primary structure comprises 309 residues: Diadenylate cyclase (309 aa).

Residues 144–301 enclose the DAC domain; sequence TITLYELFET…DGKIVFETDP (158 aa).

This sequence belongs to the adenylate cyclase family. DacZ subfamily. Mn(2+) is required as a cofactor.

The catalysed reaction is 2 ATP = 3',3'-c-di-AMP + 2 diphosphate. Its function is as follows. Diadenylate cyclase that catalyzes the condensation of 2 ATP molecules into cyclic di-AMP (c-di-AMP). c-di-AMP is a second messenger for intracellular signal transduction involved in the control of important regulatory processes such as osmoregulation. The chain is Diadenylate cyclase from Methanocaldococcus jannaschii (strain ATCC 43067 / DSM 2661 / JAL-1 / JCM 10045 / NBRC 100440) (Methanococcus jannaschii).